We begin with the raw amino-acid sequence, 331 residues long: Probable deacetylase MTH_1194 (331 aa).

Histidine 118 functions as the Proton donor/acceptor in the catalytic mechanism. Positions 155, 157, and 244 each coordinate Zn(2+).

This sequence belongs to the histone deacetylase family. Zn(2+) serves as cofactor.

In terms of biological role, probable deacetylase. This Methanothermobacter thermautotrophicus (strain ATCC 29096 / DSM 1053 / JCM 10044 / NBRC 100330 / Delta H) (Methanobacterium thermoautotrophicum) protein is Probable deacetylase MTH_1194.